An 85-amino-acid polypeptide reads, in one-letter code: uncharacterized protein (85 aa).

Disordered regions lie at residues 1-28 and 35-54; these read MPQK…LRKA and SKKK…SLTE. A compositionally biased stretch (basic residues) spans 35-48; sequence SKKKSLQHLKKLKK.

Its subcellular location is the nucleus. This is an uncharacterized protein from Saccharomyces cerevisiae (strain ATCC 204508 / S288c) (Baker's yeast).